The following is a 355-amino-acid chain: Peptide chain release factor 1 (355 aa).

Residue Q231 is modified to N5-methylglutamine.

The protein belongs to the prokaryotic/mitochondrial release factor family. Post-translationally, methylated by PrmC. Methylation increases the termination efficiency of RF1.

Its subcellular location is the cytoplasm. Functionally, peptide chain release factor 1 directs the termination of translation in response to the peptide chain termination codons UAG and UAA. The chain is Peptide chain release factor 1 from Aliarcobacter butzleri (strain RM4018) (Arcobacter butzleri).